Here is a 115-residue protein sequence, read N- to C-terminus: Large ribosomal subunit protein uL22 (115 aa).

This sequence belongs to the universal ribosomal protein uL22 family. Part of the 50S ribosomal subunit.

In terms of biological role, this protein binds specifically to 23S rRNA; its binding is stimulated by other ribosomal proteins, e.g. L4, L17, and L20. It is important during the early stages of 50S assembly. It makes multiple contacts with different domains of the 23S rRNA in the assembled 50S subunit and ribosome. Functionally, the globular domain of the protein is located near the polypeptide exit tunnel on the outside of the subunit, while an extended beta-hairpin is found that lines the wall of the exit tunnel in the center of the 70S ribosome. This is Large ribosomal subunit protein uL22 from Coxiella burnetii (strain CbuG_Q212) (Coxiella burnetii (strain Q212)).